A 383-amino-acid polypeptide reads, in one-letter code: Probable protein phosphatase 2C 13 (383 aa).

A PPM-type phosphatase domain is found at 78–349; sequence RSGSFADIRS…DNMTVIVICF (272 aa). Residues aspartate 121, glycine 122, aspartate 297, and aspartate 340 each coordinate Mn(2+).

Belongs to the PP2C family. It depends on Mg(2+) as a cofactor. Requires Mn(2+) as cofactor.

It carries out the reaction O-phospho-L-seryl-[protein] + H2O = L-seryl-[protein] + phosphate. The enzyme catalyses O-phospho-L-threonyl-[protein] + H2O = L-threonyl-[protein] + phosphate. This Arabidopsis thaliana (Mouse-ear cress) protein is Probable protein phosphatase 2C 13.